The primary structure comprises 418 residues: RapA guanosine triphosphatase-activating protein B (418 aa).

Residues 142 to 407 (LVKVCEPEFN…EKASALINVI (266 aa)) form the Rap-GAP domain. A disordered region spans residues 304–339 (NRVVGEQPSPSLTTTTTTTTTTSPTINSNSPTPSNK). The span at 311–338 (PSPSLTTTTTTTTTTSPTINSNSPTPSN) shows a compositional bias: low complexity.

Its function is as follows. Mediates the deactivation of rap1 during multicellular development and is required for normal morphogenesis. Also required for the correct patterning of specific subtypes of prestalk cells. This Dictyostelium discoideum (Social amoeba) protein is RapA guanosine triphosphatase-activating protein B (rapgapB).